A 31-amino-acid polypeptide reads, in one-letter code: Cycloviolacin-O23 (31 aa).

The cyclopeptide (Gly-Asn) cross-link spans 1 to 31; that stretch reads GLPTCGETCFGGTCNTPGCTCDSSWPICTHN. 3 disulfide bridges follow: cysteine 5-cysteine 19, cysteine 9-cysteine 21, and cysteine 14-cysteine 28.

Post-translationally, this is a cyclic peptide. Expressed in leaves but not in petals, petioles, roots and runners (at protein level).

Its function is as follows. Probably participates in a plant defense mechanism. In Viola odorata (Sweet violet), this protein is Cycloviolacin-O23.